A 229-amino-acid chain; its full sequence is Potassium/proton antiporter CemA (229 aa).

4 helical membrane passes run 11 to 31 (TTPFLYLASIVFLPWWISLFF), 118 to 138 (IISFVILSVCSILGNEELVIL), 158 to 178 (LLALTDFLFGFHTISAWELLI), and 190 to 210 (LLVCLFPSVLHTIYYFWTFNY).

This sequence belongs to the CemA family.

It is found in the plastid. It localises to the chloroplast inner membrane. The enzyme catalyses K(+)(in) + H(+)(out) = K(+)(out) + H(+)(in). Contributes to K(+)/H(+) antiport activity by supporting proton efflux to control proton extrusion and homeostasis in chloroplasts in a light-dependent manner to modulate photosynthesis. Prevents excessive induction of non-photochemical quenching (NPQ) under continuous-light conditions. Indirectly promotes efficient inorganic carbon uptake into chloroplasts. In Pelargonium hortorum (Common geranium), this protein is Potassium/proton antiporter CemA.